Reading from the N-terminus, the 215-residue chain is Myelin protein zero-like protein 2 (215 aa).

Positions 1-26 (MYGKSPTRAVLFLLGLQLTALWPTAA) are cleaved as a signal peptide. The Ig-like V-type domain maps to 27–141 (VEIYTPRVLE…DGLIGEIQLS (115 aa)). Over 27–154 (VEIYTPRVLE…TVRFSEIHFL (128 aa)) the chain is Extracellular. Residues Asn-39 and Asn-118 are each glycosylated (N-linked (GlcNAc...) asparagine). A disulfide bridge connects residues Cys-47 and Cys-123. The chain crosses the membrane as a helical span at residues 155–175 (ALAIGSACALMVIIVIVVVLF). At 176–215 (QHFRKKRRAERAHRVVEIKSKEEEKLNQEKKASVSLEYTD) the chain is on the cytoplasmic side.

It belongs to the myelin P0 protein family.

Its subcellular location is the membrane. Mediates homophilic cell-cell adhesion. This Bos taurus (Bovine) protein is Myelin protein zero-like protein 2 (MPZL2).